The chain runs to 402 residues: 2,3-bisphosphoglycerate-independent phosphoglycerate mutase 2 (402 aa).

It belongs to the BPG-independent phosphoglycerate mutase family. A-PGAM subfamily.

It catalyses the reaction (2R)-2-phosphoglycerate = (2R)-3-phosphoglycerate. It participates in carbohydrate degradation; glycolysis; pyruvate from D-glyceraldehyde 3-phosphate: step 3/5. Its function is as follows. Catalyzes the interconversion of 2-phosphoglycerate and 3-phosphoglycerate. The chain is 2,3-bisphosphoglycerate-independent phosphoglycerate mutase 2 (apgM2) from Methanothermobacter thermautotrophicus (strain ATCC 29096 / DSM 1053 / JCM 10044 / NBRC 100330 / Delta H) (Methanobacterium thermoautotrophicum).